Here is a 337-residue protein sequence, read N- to C-terminus: Anthranilate phosphoribosyltransferase (337 aa).

5-phospho-alpha-D-ribose 1-diphosphate contacts are provided by residues Gly80, 83 to 84 (GD), Thr88, 90 to 93 (NIST), 108 to 116 (KHGNRAVSS), and Ser120. Gly80 is a binding site for anthranilate. Residue Ser92 coordinates Mg(2+). Asn111 serves as a coordination point for anthranilate. Arg166 serves as a coordination point for anthranilate. Positions 224 and 225 each coordinate Mg(2+).

This sequence belongs to the anthranilate phosphoribosyltransferase family. In terms of assembly, homodimer. Mg(2+) is required as a cofactor.

It catalyses the reaction N-(5-phospho-beta-D-ribosyl)anthranilate + diphosphate = 5-phospho-alpha-D-ribose 1-diphosphate + anthranilate. The protein operates within amino-acid biosynthesis; L-tryptophan biosynthesis; L-tryptophan from chorismate: step 2/5. Its function is as follows. Catalyzes the transfer of the phosphoribosyl group of 5-phosphorylribose-1-pyrophosphate (PRPP) to anthranilate to yield N-(5'-phosphoribosyl)-anthranilate (PRA). The polypeptide is Anthranilate phosphoribosyltransferase (Anaeromyxobacter dehalogenans (strain 2CP-C)).